The primary structure comprises 159 residues: MSRISHITLDDSGLPPPTPEIEQERKVAMFDLLEDNTFVLPPREGRPVPEGPYHVSLAIRDKRLVFDVNTETAEKAAEFHLSLGPFRQVVKDYFQICESYFDAVKKLPPSQIETIDMARRGIHNEGSRVLQERLEGKADIDIDTARRLFTLICVLHFGG.

Belongs to the UPF0262 family.

The polypeptide is UPF0262 protein RD1_1069 (Roseobacter denitrificans (strain ATCC 33942 / OCh 114) (Erythrobacter sp. (strain OCh 114))).